The following is a 339-amino-acid chain: Methionine import ATP-binding protein MetN 2 (339 aa).

The ABC transporter domain maps to 2-241 (ISFNNVSKVY…PKTTTTQNFV (240 aa)). 38–45 (GFSGAGKS) provides a ligand contact to ATP.

It belongs to the ABC transporter superfamily. Methionine importer (TC 3.A.1.24) family. The complex is composed of two ATP-binding proteins (MetN), two transmembrane proteins (MetI) and a solute-binding protein (MetQ).

The protein resides in the cell membrane. It carries out the reaction L-methionine(out) + ATP + H2O = L-methionine(in) + ADP + phosphate + H(+). It catalyses the reaction D-methionine(out) + ATP + H2O = D-methionine(in) + ADP + phosphate + H(+). In terms of biological role, part of the ABC transporter complex MetNIQ involved in methionine import. Responsible for energy coupling to the transport system. The protein is Methionine import ATP-binding protein MetN 2 of Bacillus anthracis.